Here is a 249-residue protein sequence, read N- to C-terminus: Hydroxyacylglutathione hydrolase (249 aa).

Residues H54, H56, D58, H59, H113, D138, and H176 each coordinate Zn(2+).

This sequence belongs to the metallo-beta-lactamase superfamily. Glyoxalase II family. In terms of assembly, monomer. The cofactor is Zn(2+).

It carries out the reaction an S-(2-hydroxyacyl)glutathione + H2O = a 2-hydroxy carboxylate + glutathione + H(+). It functions in the pathway secondary metabolite metabolism; methylglyoxal degradation; (R)-lactate from methylglyoxal: step 2/2. Thiolesterase that catalyzes the hydrolysis of S-D-lactoyl-glutathione to form glutathione and D-lactic acid. This chain is Hydroxyacylglutathione hydrolase, found in Parasynechococcus marenigrum (strain WH8102).